The sequence spans 1415 residues: Uveal autoantigen with coiled-coil domains and ankyrin repeats (1415 aa).

5 ANK repeats span residues 69–98 (EGRSAFHVVASKGNLECLNAILIHGVDITT), 102–131 (AGRNALHLAAKYGHALCLQKLLQYNCPTEH), 135–164 (QGRTALHDAAMADCPSSIQLLCDHGASVNA), 168–197 (DGRTPLVLATQMCRPAICQLLIDRGAEINS), and 201–230 (QNRTALMLGCEYGCKDAVEVLLKNGADVSL). Residues 288–376 (VKSSQREHRN…TIESLKNRFK (89 aa)) are a coiled coil. Residues 617–646 (ELLAKLTLSVPTEKFESMKSLLSSEVNEKV) form an ANK 6 repeat. Residues 759–1381 (TVEELKKQLL…TDRQHQEVIA (623 aa)) adopt a coiled-coil conformation. Lys1034 participates in a covalent cross-link: Glycyl lysine isopeptide (Lys-Gly) (interchain with G-Cter in SUMO2). The span at 1186–1201 (LREKEEESQNKTEEVS) shows a compositional bias: basic and acidic residues. The disordered stretch occupies residues 1186 to 1205 (LREKEEESQNKTEEVSKLQS).

Component of the apoptosome complex, composed of APAF1, pro-caspase-9 and UACA. In the complex, it probably interacts directly with APAF1. Interacts with LGALS3, ARF6 and ACTB. Interacts with RAB39A. Highly expressed in adrenal, testis, kidney and large intestine.

It is found in the nucleus. Its subcellular location is the cytoplasm. The protein resides in the cytoskeleton. In terms of biological role, regulates APAF1 expression and plays an important role in the regulation of stress-induced apoptosis. Promotes apoptosis by regulating three pathways, apoptosome up-regulation, LGALS3/galectin-3 down-regulation and NF-kappa-B inactivation. Regulates the redistribution of APAF1 into the nucleus after proapoptotic stress. Down-regulates the expression of LGALS3 by inhibiting NFKB1. Its function is as follows. Modulates isoactin dynamics to regulate the morphological alterations required for cell growth and motility. Interaction with ARF6 may modulate cell shape and motility after injury. May be involved in multiple neurite formation. This chain is Uveal autoantigen with coiled-coil domains and ankyrin repeats (UACA), found in Canis lupus familiaris (Dog).